A 186-amino-acid chain; its full sequence is ATP synthase subunit delta (186 aa).

It belongs to the ATPase delta chain family. F-type ATPases have 2 components, F(1) - the catalytic core - and F(0) - the membrane proton channel. F(1) has five subunits: alpha(3), beta(3), gamma(1), delta(1), epsilon(1). F(0) has three main subunits: a(1), b(2) and c(10-14). The alpha and beta chains form an alternating ring which encloses part of the gamma chain. F(1) is attached to F(0) by a central stalk formed by the gamma and epsilon chains, while a peripheral stalk is formed by the delta and b chains.

It is found in the cell inner membrane. Its function is as follows. F(1)F(0) ATP synthase produces ATP from ADP in the presence of a proton or sodium gradient. F-type ATPases consist of two structural domains, F(1) containing the extramembraneous catalytic core and F(0) containing the membrane proton channel, linked together by a central stalk and a peripheral stalk. During catalysis, ATP synthesis in the catalytic domain of F(1) is coupled via a rotary mechanism of the central stalk subunits to proton translocation. Functionally, this protein is part of the stalk that links CF(0) to CF(1). It either transmits conformational changes from CF(0) to CF(1) or is implicated in proton conduction. This Leptospira borgpetersenii serovar Hardjo-bovis (strain JB197) protein is ATP synthase subunit delta.